A 596-amino-acid polypeptide reads, in one-letter code: Probable protein S-acyltransferase 22 (596 aa).

2 helical membrane passes run 15–35 (VVAV…FAPF) and 44–64 (IAMG…IWCA). A disordered region spans residues 102–125 (TGGAKSHDGTCVEDTENGSNKKLE). One can recognise a DHHC domain in the interval 163 to 213 (FYCSLCEVEVFKYSKHCRVCDKCVDRFDHHCRWLNNCIGKRNYRKFFSLMV). Residue Cys193 is the S-palmitoyl cysteine intermediate of the active site. The next 2 helical transmembrane spans lie at 215 to 235 (AIFL…LCLL) and 254 to 274 (LIPF…ATLP). Disordered stretches follow at residues 433–455 (SGRR…RRQS), 498–523 (QTSR…DSHD), and 549–596 (MGQQ…HKSR). Over residues 498 to 518 (QTSRAMSGSGNVMVTSSPESS) the composition is skewed to polar residues. A compositionally biased stretch (low complexity) spans 549–571 (MGQQRGQQQQQQLSMMMMPLSRS).

Belongs to the DHHC palmitoyltransferase family.

It is found in the cell membrane. The protein resides in the cytoplasmic vesicle membrane. The enzyme catalyses L-cysteinyl-[protein] + hexadecanoyl-CoA = S-hexadecanoyl-L-cysteinyl-[protein] + CoA. Its function is as follows. Palmitoyl acyltransferase. This Arabidopsis thaliana (Mouse-ear cress) protein is Probable protein S-acyltransferase 22 (PAT22).